The chain runs to 165 residues: Crossover junction endodeoxyribonuclease RuvC (165 aa).

Catalysis depends on residues Asp7, Glu67, and Asp140. Asp7, Glu67, and Asp140 together coordinate Mg(2+).

Belongs to the RuvC family. In terms of assembly, homodimer which binds Holliday junction (HJ) DNA. The HJ becomes 2-fold symmetrical on binding to RuvC with unstacked arms; it has a different conformation from HJ DNA in complex with RuvA. In the full resolvosome a probable DNA-RuvA(4)-RuvB(12)-RuvC(2) complex forms which resolves the HJ. It depends on Mg(2+) as a cofactor.

Its subcellular location is the cytoplasm. The enzyme catalyses Endonucleolytic cleavage at a junction such as a reciprocal single-stranded crossover between two homologous DNA duplexes (Holliday junction).. Functionally, the RuvA-RuvB-RuvC complex processes Holliday junction (HJ) DNA during genetic recombination and DNA repair. Endonuclease that resolves HJ intermediates. Cleaves cruciform DNA by making single-stranded nicks across the HJ at symmetrical positions within the homologous arms, yielding a 5'-phosphate and a 3'-hydroxyl group; requires a central core of homology in the junction. The consensus cleavage sequence is 5'-(A/T)TT(C/G)-3'. Cleavage occurs on the 3'-side of the TT dinucleotide at the point of strand exchange. HJ branch migration catalyzed by RuvA-RuvB allows RuvC to scan DNA until it finds its consensus sequence, where it cleaves and resolves the cruciform DNA. The protein is Crossover junction endodeoxyribonuclease RuvC of Caldanaerobacter subterraneus subsp. tengcongensis (strain DSM 15242 / JCM 11007 / NBRC 100824 / MB4) (Thermoanaerobacter tengcongensis).